The chain runs to 839 residues: uncharacterized protein (839 aa).

Disordered stretches follow at residues Thr-504–Asn-611, Lys-627–Cys-646, and Asn-682–Ser-839. Over residues Gly-509–Asn-611 the composition is skewed to low complexity. Residues Asn-636–Cys-646 are compositionally biased toward basic and acidic residues. 2 stretches are compositionally biased toward low complexity: residues Asn-689 to Asn-704 and Gln-713 to Lys-753. Residues Gln-726 to Ser-764 are a coiled coil. The segment covering Asp-765 to Arg-776 has biased composition (basic and acidic residues). The span at Glu-809–Asp-823 shows a compositional bias: acidic residues.

This is an uncharacterized protein from Dictyostelium discoideum (Social amoeba).